Here is a 336-residue protein sequence, read N- to C-terminus: CST complex subunit STN1 (336 aa).

A DNA-binding region (OB) is located at residues 49 to 126 (VDILGTVVCV…EVVASIFYKV (78 aa)). Winged helix-turn-helix (wHTH) regions lie at residues 162–263 (QSQE…YVTD) and 264–336 (HDKE…YTAF).

The protein belongs to the CTC1 family. As to quaternary structure, component of the CST complex.

Its subcellular location is the nucleus. The protein resides in the chromosome. It is found in the telomere. Its function is as follows. Component of the CST complex proposed to act as a specialized replication factor promoting DNA replication under conditions of replication stress or natural replication barriers such as the telomere duplex. The CST complex binds single-stranded DNA with high affinity in a sequence-independent manner, while isolated subunits bind DNA with low affinity by themselves. Initially the CST complex has been proposed to protect telomeres from DNA degradation. However, the CST complex has been shown to be involved in several aspects of telomere replication. The sequence is that of CST complex subunit STN1 from Aquarana catesbeiana (American bullfrog).